A 441-amino-acid chain; its full sequence is Proline--tRNA ligase (441 aa).

The protein belongs to the class-II aminoacyl-tRNA synthetase family. ProS type 2 subfamily. Homodimer.

Its subcellular location is the cytoplasm. It carries out the reaction tRNA(Pro) + L-proline + ATP = L-prolyl-tRNA(Pro) + AMP + diphosphate. Its function is as follows. Catalyzes the attachment of proline to tRNA(Pro) in a two-step reaction: proline is first activated by ATP to form Pro-AMP and then transferred to the acceptor end of tRNA(Pro). This is Proline--tRNA ligase from Methylobacterium radiotolerans (strain ATCC 27329 / DSM 1819 / JCM 2831 / NBRC 15690 / NCIMB 10815 / 0-1).